A 188-amino-acid polypeptide reads, in one-letter code: Probable RNA 2'-phosphotransferase (188 aa).

This sequence belongs to the KptA/TPT1 family.

In terms of biological role, removes the 2'-phosphate from RNA via an intermediate in which the phosphate is ADP-ribosylated by NAD followed by a presumed transesterification to release the RNA and generate ADP-ribose 1''-2''-cyclic phosphate (APPR&gt;P). May function as an ADP-ribosylase. This chain is Probable RNA 2'-phosphotransferase, found in Lacticaseibacillus paracasei (strain ATCC 334 / BCRC 17002 / CCUG 31169 / CIP 107868 / KCTC 3260 / NRRL B-441) (Lactobacillus paracasei).